The following is a 1247-amino-acid chain: Leucine-rich repeat-containing protein 53 (1247 aa).

7 LRR repeats span residues 34-55 (TTRV…NLSL), 58-79 (NLAL…ALHG), 82-102 (MLRT…TDHT), 108-129 (SLQV…WFRN), 132-153 (GLTR…SFGG), 158-179 (SLRY…AFRP), and 182-203 (QLQE…FTPL). Residues 214–271 (NQWSCTCDLHPLARFLRNYIKSSAHTLRNAKDLNCQPSTAAVAAAQSVLRLSETNCDS) form the LRRCT domain. A helical membrane pass occupies residues 294–314 (LLTVLGFAGAVGLTCLGLVVF). Disordered stretches follow at residues 828–866 (SAGH…EDAT), 887–927 (VLPF…SPRN), and 1223–1247 (ENSA…LETE). Composition is skewed to polar residues over residues 898 to 927 (DQGT…SPRN) and 1238 to 1247 (YATTSPLETE).

It localises to the membrane. This is Leucine-rich repeat-containing protein 53 (LRRC53) from Homo sapiens (Human).